A 432-amino-acid chain; its full sequence is Adenosylhomocysteinase (432 aa).

The segment at 1-24 is disordered; sequence MSAYSPLSAQLDADTDVDVESTRT. The substrate site is built by aspartate 137 and glutamate 162. 163 to 165 serves as a coordination point for NAD(+); that stretch reads TTT. Substrate contacts are provided by lysine 192 and aspartate 196. NAD(+)-binding positions include asparagine 197, 226 to 231, glutamate 249, asparagine 284, 305 to 307, and asparagine 352; these read GYGYCG and AGH.

This sequence belongs to the adenosylhomocysteinase family. NAD(+) is required as a cofactor.

Its subcellular location is the cytoplasm. The enzyme catalyses S-adenosyl-L-homocysteine + H2O = L-homocysteine + adenosine. It participates in amino-acid biosynthesis; L-homocysteine biosynthesis; L-homocysteine from S-adenosyl-L-homocysteine: step 1/1. Its function is as follows. May play a key role in the regulation of the intracellular concentration of adenosylhomocysteine. This is Adenosylhomocysteinase from Haloquadratum walsbyi (strain DSM 16790 / HBSQ001).